We begin with the raw amino-acid sequence, 369 residues long: S-(hydroxymethyl)glutathione dehydrogenase (369 aa).

The Zn(2+) site is built by C40, H62, C92, C95, C98, C106, and C169.

It belongs to the zinc-containing alcohol dehydrogenase family. Class-III subfamily. As to quaternary structure, homodimer. Zn(2+) serves as cofactor.

It localises to the cytoplasm. It carries out the reaction S-(hydroxymethyl)glutathione + NADP(+) = S-formylglutathione + NADPH + H(+). It catalyses the reaction S-(hydroxymethyl)glutathione + NAD(+) = S-formylglutathione + NADH + H(+). The catalysed reaction is a primary alcohol + NAD(+) = an aldehyde + NADH + H(+). The enzyme catalyses a secondary alcohol + NAD(+) = a ketone + NADH + H(+). It carries out the reaction S-nitrosoglutathione + NADH + H(+) = S-(hydroxysulfenamide)glutathione + NAD(+). Has high formaldehyde dehydrogenase activity in the presence of glutathione and catalyzes the oxidation of normal alcohols in a reaction that is not GSH-dependent. In addition, hemithiolacetals other than those formed from GSH, including omega-thiol fatty acids, also are substrates. Also acts as a S-nitroso-glutathione reductase by catalyzing the NADH-dependent reduction of S-nitrosoglutathione. In Escherichia coli O1:K1 / APEC, this protein is S-(hydroxymethyl)glutathione dehydrogenase (frmA).